Reading from the N-terminus, the 118-residue chain is DNA-binding protein inhibitor ID-3-A (118 aa).

In terms of domain architecture, bHLH spans 32–84 (SHKGPGMDEPMGLLYDMNGCYSKLKELVPGIPQGSKLSQVEILQHVIDYIFDL).

In terms of assembly, homodimer. Heterodimer with other HLH proteins. Interacts (via HLH domain) with the bHLH protein hes4/hairy2 (via Orange domain). Interacts with stat3. At gastrula stage, expressed in all three germ layers, but becomes localized to discrete domains of the developing nervous system during neurulation, including the anterior neural plate, cement gland, eye anlagen, otic placode and both cranial and trunk premigratory and early migratory neural crest cells. Also expressed in the most dorsal and ventral portions of the myotome, the developing heart and anterior blood islets, and in the tail fin mesenchyme. Expressed at a low level in limbs, with expression decreasing as limbs develop, but expressed at a high level in blastemas (regenerated limbs), where expression is localized to both the blastermal epidermis and mesenchyme. Widely expressed in adults including the liver and heart.

Its subcellular location is the nucleus. Functionally, transcriptional regulator (lacking a basic DNA binding domain) which negatively regulates the basic helix-loop-helix (bHLH) transcription factors by forming heterodimers and inhibiting their DNA binding and transcriptional activity. Influences cell fate decisions in the embryo by sequestering and blocking the activity of the bHLH transcription factors that control these decisions. Inhibits the binding of myogenic bHLH-containing complexes to E-box DNA, thereby preventing activation of muscle-specific target genes. Also inhibits the activity of neurogenic factor neurod1/neuroD. Plays a role in cell cycle progression and survival of neural crest progenitors; binding to either hes4-B/hairy2b or stat3 blocks the formation of transcription factor complexes and the repressor function of hes4-B/hairy2B, to allow neural crest progenitors to differentiate. May play a role in the regulation of the circadian rhythm. This Xenopus laevis (African clawed frog) protein is DNA-binding protein inhibitor ID-3-A (id3-a).